Reading from the N-terminus, the 743-residue chain is Catalase-peroxidase (743 aa).

Residues 1-29 (MNAESGENAGGGCPLGHGAGAPRKRPSNR) are disordered. Positions 8–19 (NAGGGCPLGHGA) are enriched in gly residues. The segment at residues 100-222 (WHSAGTYRIT…LGAVQMGLIY (123 aa)) is a cross-link (tryptophyl-tyrosyl-methioninium (Trp-Tyr) (with M-248)). The Proton acceptor role is filled by histidine 101. The tryptophyl-tyrosyl-methioninium (Tyr-Met) (with W-100) cross-link spans 222 to 248 (YVNPEGPNGNPDPKAAAVDIRETFARM). A heme b-binding site is contributed by histidine 263.

This sequence belongs to the peroxidase family. Peroxidase/catalase subfamily. Homodimer or homotetramer. Requires heme b as cofactor. In terms of processing, formation of the three residue Trp-Tyr-Met cross-link is important for the catalase, but not the peroxidase activity of the enzyme.

It carries out the reaction H2O2 + AH2 = A + 2 H2O. The enzyme catalyses 2 H2O2 = O2 + 2 H2O. Bifunctional enzyme with both catalase and broad-spectrum peroxidase activity. This is Catalase-peroxidase from Stutzerimonas stutzeri (strain A1501) (Pseudomonas stutzeri).